Here is an 820-residue protein sequence, read N- to C-terminus: Phosphoenolpyruvate synthase (820 aa).

H438 functions as the Tele-phosphohistidine intermediate in the catalytic mechanism. The substrate site is built by R539, R587, E689, G710, S711, N712, and D713. Mg(2+) is bound at residue E689. Residue D713 coordinates Mg(2+). C762 (proton donor) is an active-site residue.

It belongs to the PEP-utilizing enzyme family. Mg(2+) serves as cofactor.

The catalysed reaction is pyruvate + ATP + H2O = phosphoenolpyruvate + AMP + phosphate + 2 H(+). It functions in the pathway carbohydrate biosynthesis; gluconeogenesis. Its function is as follows. Catalyzes the phosphorylation of pyruvate to phosphoenolpyruvate. The chain is Phosphoenolpyruvate synthase (ppsA) from Aeropyrum pernix (strain ATCC 700893 / DSM 11879 / JCM 9820 / NBRC 100138 / K1).